The sequence spans 558 residues: EF-hand and coiled-coil domain-containing protein 1 (558 aa).

Positions 43 to 78 (GLDQYLQEVFHHLDCRGAGRLPRADFRALCAVLGLN) constitute an EF-hand domain. Basic residues predominate over residues 161–170 (LRRPRRRRRP). Disordered stretches follow at residues 161-183 (LRRP…YGER) and 304-395 (RSEG…QPSG). Coiled-coil stretches lie at residues 179 to 304 (AYGE…RGYR) and 453 to 495 (VEAE…LNIS).

The chain is EF-hand and coiled-coil domain-containing protein 1 (Efcc1) from Mus musculus (Mouse).